The primary structure comprises 492 residues: Transmembrane protein 39B (492 aa).

The tract at residues 1-53 (MGGRRGPNRTSYYRNPLCEPGSSGASGGGHSSSASVSSVRSRSRTTSGTGLSS) is disordered. N8 is a glycosylation site (N-linked (GlcNAc...) asparagine). The span at 31-53 (SSSASVSSVRSRSRTTSGTGLSS) shows a compositional bias: low complexity. The next 8 helical transmembrane spans lie at 77-97 (SILF…VHYI), 115-135 (TSLN…IVLG), 153-175 (SLFR…GWSL), 185-205 (TYSF…IPFL), 288-308 (EVLV…VWFV), 322-342 (LFLL…LPAS), 421-441 (ILNI…YSLM), and 447-467 (HQTI…FKLL).

This sequence belongs to the TMEM39 family.

Its subcellular location is the endoplasmic reticulum membrane. Its function is as follows. May protect the cells against DNA damage caused by exposure to the cold-warming stress and facilitates tissue damage repair during the recovery phase. This is Transmembrane protein 39B from Mus musculus (Mouse).